The sequence spans 527 residues: Lysine--tRNA ligase (527 aa).

Positions 44–52 (PSGLPHIGT) match the 'HIGH' region motif. The 'KMSKS' region motif lies at 290–294 (KISKS). Residue Lys293 participates in ATP binding.

Belongs to the class-I aminoacyl-tRNA synthetase family.

It localises to the cytoplasm. The catalysed reaction is tRNA(Lys) + L-lysine + ATP = L-lysyl-tRNA(Lys) + AMP + diphosphate. The protein is Lysine--tRNA ligase of Roseobacter denitrificans (strain ATCC 33942 / OCh 114) (Erythrobacter sp. (strain OCh 114)).